The following is a 172-amino-acid chain: Large ribosomal subunit protein bL17 (172 aa).

The disordered stretch occupies residues 127-172 (KAAKQDRAKRVKGSKKVTGDVAPAVAPVPSAPAETQEEAKAPESAE). Residues 147 to 159 (VAPAVAPVPSAPA) show a composition bias toward low complexity. Positions 163–172 (EEAKAPESAE) are enriched in basic and acidic residues.

The protein belongs to the bacterial ribosomal protein bL17 family. Part of the 50S ribosomal subunit. Contacts protein L32.

In Chlorobium luteolum (strain DSM 273 / BCRC 81028 / 2530) (Pelodictyon luteolum), this protein is Large ribosomal subunit protein bL17.